The chain runs to 833 residues: Lon protease (833 aa).

In terms of domain architecture, Lon N-terminal spans 3–198; the sequence is YPFMATRGVI…LIFSFLVELK (196 aa). Residue 390-397 coordinates ATP; the sequence is GPPGTGKT. The Lon proteolytic domain occupies 627–808; the sequence is YERIGAVNGL…DEIFENLFGK (182 aa). Residues Ser-714 and Lys-757 contribute to the active site.

The protein belongs to the peptidase S16 family. As to quaternary structure, homohexamer. Organized in a ring with a central cavity.

The protein resides in the cytoplasm. The catalysed reaction is Hydrolysis of proteins in presence of ATP.. ATP-dependent serine protease that mediates the selective degradation of mutant and abnormal proteins as well as certain short-lived regulatory proteins. Required for cellular homeostasis and for survival from DNA damage and developmental changes induced by stress. Degrades polypeptides processively to yield small peptide fragments that are 5 to 10 amino acids long. Binds to DNA in a double-stranded, site-specific manner. This Mycoplasma mobile (strain ATCC 43663 / 163K / NCTC 11711) (Mesomycoplasma mobile) protein is Lon protease.